We begin with the raw amino-acid sequence, 743 residues long: Phosphoribosylformylglycinamidine synthase subunit PurL (743 aa).

Residue His-50 is part of the active site. Residues Tyr-53 and Lys-92 each contribute to the ATP site. Residue Glu-94 coordinates Mg(2+). Substrate contacts are provided by residues 95 to 98 (SHNH) and Arg-117. The active-site Proton acceptor is His-96. Residue Asp-118 coordinates Mg(2+). Substrate is bound at residue Gln-241. Asp-269 lines the Mg(2+) pocket. Residue 313–315 (ESQ) participates in substrate binding. Residues Asp-494 and Gly-531 each contribute to the ATP site. Position 532 (Asn-532) interacts with Mg(2+). Ser-534 is a substrate binding site.

Belongs to the FGAMS family. Monomer. Part of the FGAM synthase complex composed of 1 PurL, 1 PurQ and 2 PurS subunits.

Its subcellular location is the cytoplasm. The catalysed reaction is N(2)-formyl-N(1)-(5-phospho-beta-D-ribosyl)glycinamide + L-glutamine + ATP + H2O = 2-formamido-N(1)-(5-O-phospho-beta-D-ribosyl)acetamidine + L-glutamate + ADP + phosphate + H(+). The protein operates within purine metabolism; IMP biosynthesis via de novo pathway; 5-amino-1-(5-phospho-D-ribosyl)imidazole from N(2)-formyl-N(1)-(5-phospho-D-ribosyl)glycinamide: step 1/2. Part of the phosphoribosylformylglycinamidine synthase complex involved in the purines biosynthetic pathway. Catalyzes the ATP-dependent conversion of formylglycinamide ribonucleotide (FGAR) and glutamine to yield formylglycinamidine ribonucleotide (FGAM) and glutamate. The FGAM synthase complex is composed of three subunits. PurQ produces an ammonia molecule by converting glutamine to glutamate. PurL transfers the ammonia molecule to FGAR to form FGAM in an ATP-dependent manner. PurS interacts with PurQ and PurL and is thought to assist in the transfer of the ammonia molecule from PurQ to PurL. This Sinorhizobium fredii (strain HH103) protein is Phosphoribosylformylglycinamidine synthase subunit PurL.